A 50-amino-acid chain; its full sequence is uncharacterized protein (50 aa).

This is an uncharacterized protein from Saccharomyces cerevisiae (strain ATCC 204508 / S288c) (Baker's yeast).